The sequence spans 212 residues: ATP-dependent dethiobiotin synthetase BioD (212 aa).

Asp-12–Phe-17 contacts ATP. A Mg(2+)-binding site is contributed by Thr-16. The active site involves Lys-33. A substrate-binding site is contributed by Ser-37. Residues Asp-50, Glu-110–Gly-113, and Asn-170–Cys-171 each bind ATP. Mg(2+)-binding residues include Asp-50 and Glu-110.

It belongs to the dethiobiotin synthetase family. Homodimer. The cofactor is Mg(2+).

It is found in the cytoplasm. It carries out the reaction (7R,8S)-7,8-diammoniononanoate + CO2 + ATP = (4R,5S)-dethiobiotin + ADP + phosphate + 3 H(+). It functions in the pathway cofactor biosynthesis; biotin biosynthesis; biotin from 7,8-diaminononanoate: step 1/2. Its function is as follows. Catalyzes a mechanistically unusual reaction, the ATP-dependent insertion of CO2 between the N7 and N8 nitrogen atoms of 7,8-diaminopelargonic acid (DAPA, also called 7,8-diammoniononanoate) to form a ureido ring. The chain is ATP-dependent dethiobiotin synthetase BioD from Legionella pneumophila (strain Corby).